The sequence spans 224 residues: tRNA (guanine-N(7)-)-methyltransferase (224 aa).

S-adenosyl-L-methionine is bound by residues Glu45, Glu70, Asp97, and Asp119. Residue Asp119 is part of the active site. Residues Lys123, Asp155, and 199–202 contribute to the substrate site; that span reads TEYE.

It belongs to the class I-like SAM-binding methyltransferase superfamily. TrmB family.

The catalysed reaction is guanosine(46) in tRNA + S-adenosyl-L-methionine = N(7)-methylguanosine(46) in tRNA + S-adenosyl-L-homocysteine. Its pathway is tRNA modification; N(7)-methylguanine-tRNA biosynthesis. Its function is as follows. Catalyzes the formation of N(7)-methylguanine at position 46 (m7G46) in tRNA. The protein is tRNA (guanine-N(7)-)-methyltransferase of Ureaplasma parvum serovar 3 (strain ATCC 27815 / 27 / NCTC 11736).